Consider the following 217-residue polypeptide: Pyrophosphatase PpaX (217 aa).

Asp11 functions as the Nucleophile in the catalytic mechanism.

This sequence belongs to the HAD-like hydrolase superfamily. PpaX family. The cofactor is Mg(2+).

It carries out the reaction diphosphate + H2O = 2 phosphate + H(+). Its function is as follows. Hydrolyzes pyrophosphate formed during P-Ser-HPr dephosphorylation by HPrK/P. Might play a role in controlling the intracellular pyrophosphate pool. The sequence is that of Pyrophosphatase PpaX from Listeria monocytogenes serotype 4a (strain HCC23).